Here is a 219-residue protein sequence, read N- to C-terminus: GPI ethanolamine phosphate transferase, stabilizing subunit (219 aa).

6 helical membrane passes run 11–31, 42–62, 86–106, 113–133, 155–175, and 189–209; these read YTHL…SLFL, TWLC…YLVV, YFLM…APLI, FLFA…LLGP, LQIT…PIPL, and TLGA…WIYW.

It belongs to the PIGF family. In terms of assembly, part of the ethanolamine phosphate transferase 3 complex composed by PIGO and PIGF. Part of the ethanolamine phosphate transferase 2 complex with PIGG. PIGF is required to stabilize PIGG and PIGO.

The protein resides in the endoplasmic reticulum membrane. The protein operates within glycolipid biosynthesis; glycosylphosphatidylinositol-anchor biosynthesis. Stabilizing subunit of the ethanolamine phosphate transferase 3 and ethanolamine phosphate transferase 2 complexes that sequentially transfer an ethanolamine phosphate (EtNP) from a phosphatidylethanolamine (PE) to the 6-OH position of the third alpha-1,2-linked mannose and the second alpha-1,6-linked mannose of the alpha-D-Man-(1-&gt;2)-alpha-D-Man-(1-&gt;6)-2-PEtn-alpha-D-Man-(1-&gt;4)-alpha-D-GlcN-(1-&gt;6)-(1-radyl,2-acyl-sn-glycero-3-phospho)-2-acyl-inositol (also termed H6) intermediate to generate a 6-PEtn-alpha-D-Man-(1-&gt;2)-6-PEtn-alpha-D-Man-(1-&gt;6)-2-PEtn-alpha-D-Man-(1-&gt;4)-alpha-D-GlcN-(1-&gt;6)-(1-radyl,2-acyl-sn-glycero-3-phospho)-2-acyl-inositol (also termed H8). Participates in the tenth and eleventh steps of the glycosylphosphatidylinositol-anchor biosynthesis, in association with PIGO and PIGG, respectively. In Homo sapiens (Human), this protein is GPI ethanolamine phosphate transferase, stabilizing subunit.